Consider the following 396-residue polypeptide: Actin-related protein 6 (396 aa).

Thr2 is subject to N-acetylthreonine. Lys260 is subject to N6-acetyllysine.

This sequence belongs to the actin family. ARP6 subfamily. Component of the chromatin-remodeling SRCAP complex composed of at least SRCAP, DMAP1, RUVBL1, RUVBL2, ACTL6A, YEATS4, ACTR6 and ZNHIT1. Interacts with CBX1, CBX3 and CBX5.

The protein localises to the cytoplasm. The protein resides in the cytoskeleton. Its subcellular location is the nucleus. It localises to the nucleolus. Its function is as follows. Required for formation and/or maintenance of proper nucleolar structure and function. Plays a dual role in the regulation of ribosomal DNA (rDNA) transcription. In the presence of high glucose, maintains active rDNA transcription through H2A.Z deposition and under glucose starvation, is required for the repression of rDNA transcription, and this function may be independent of H2A.Z. In Mus musculus (Mouse), this protein is Actin-related protein 6 (Actr6).